A 385-amino-acid polypeptide reads, in one-letter code: Deoxyguanosinetriphosphate triphosphohydrolase-like protein (385 aa).

Residues 1 to 14 (MTEGVEGRSQERSD) show a composition bias toward basic and acidic residues. Positions 1 to 23 (MTEGVEGRSQERSDLAGFAARSA) are disordered. The region spanning 75-204 (RLTHSLEVAQ…INYADEIAYN (130 aa)) is the HD domain.

The protein belongs to the dGTPase family. Type 2 subfamily.

This is Deoxyguanosinetriphosphate triphosphohydrolase-like protein from Geobacter metallireducens (strain ATCC 53774 / DSM 7210 / GS-15).